The following is a 135-amino-acid chain: UPF0102 protein RPC_0320 (135 aa).

Belongs to the UPF0102 family.

The sequence is that of UPF0102 protein RPC_0320 from Rhodopseudomonas palustris (strain BisB18).